A 380-amino-acid polypeptide reads, in one-letter code: UDP-N-acetylglucosamine--N-acetylmuramyl-(pentapeptide) pyrophosphoryl-undecaprenol N-acetylglucosamine transferase (380 aa).

UDP-N-acetyl-alpha-D-glucosamine is bound by residues 23–25, Asn-137, Arg-178, Ser-210, Ile-266, and Gln-311; that span reads TGG.

It belongs to the glycosyltransferase 28 family. MurG subfamily.

It localises to the cell inner membrane. The catalysed reaction is di-trans,octa-cis-undecaprenyl diphospho-N-acetyl-alpha-D-muramoyl-L-alanyl-D-glutamyl-meso-2,6-diaminopimeloyl-D-alanyl-D-alanine + UDP-N-acetyl-alpha-D-glucosamine = di-trans,octa-cis-undecaprenyl diphospho-[N-acetyl-alpha-D-glucosaminyl-(1-&gt;4)]-N-acetyl-alpha-D-muramoyl-L-alanyl-D-glutamyl-meso-2,6-diaminopimeloyl-D-alanyl-D-alanine + UDP + H(+). It functions in the pathway cell wall biogenesis; peptidoglycan biosynthesis. Cell wall formation. Catalyzes the transfer of a GlcNAc subunit on undecaprenyl-pyrophosphoryl-MurNAc-pentapeptide (lipid intermediate I) to form undecaprenyl-pyrophosphoryl-MurNAc-(pentapeptide)GlcNAc (lipid intermediate II). The sequence is that of UDP-N-acetylglucosamine--N-acetylmuramyl-(pentapeptide) pyrophosphoryl-undecaprenol N-acetylglucosamine transferase from Bacteroides fragilis (strain ATCC 25285 / DSM 2151 / CCUG 4856 / JCM 11019 / LMG 10263 / NCTC 9343 / Onslow / VPI 2553 / EN-2).